The primary structure comprises 267 residues: GTP cyclohydrolase FolE2 (267 aa).

The protein belongs to the GTP cyclohydrolase IV family.

It carries out the reaction GTP + H2O = 7,8-dihydroneopterin 3'-triphosphate + formate + H(+). Its pathway is cofactor biosynthesis; 7,8-dihydroneopterin triphosphate biosynthesis; 7,8-dihydroneopterin triphosphate from GTP: step 1/1. In terms of biological role, converts GTP to 7,8-dihydroneopterin triphosphate. The polypeptide is GTP cyclohydrolase FolE2 (Geobacter sp. (strain M21)).